The chain runs to 329 residues: Probable ABC transporter permease protein MG188 (329 aa).

The next 6 helical transmembrane spans lie at 30–50 (FLLFLPALLTTILFTIIPFFL), 96–116 (LISLPFSIIIAIVIASAIVFV), 128–148 (VFFLPYVTSGVAISIAFVYIF), 176–196 (ALWAILIFGVWKNLAFNVLII), 234–254 (LIFLTTLLILGGMQVFPLALF), and 283–303 (NLAGAATLVLFVLGVCYGLVL). In terms of domain architecture, ABC transmembrane type-1 spans 88–303 (LRNSFLYSLI…VLGVCYGLVL (216 aa)).

The protein belongs to the binding-protein-dependent transport system permease family. MalFG subfamily.

It localises to the cell membrane. Probably part of a binding-protein-dependent transport system. Probably responsible for the translocation of the substrate across the membrane. The protein is Probable ABC transporter permease protein MG188 of Mycoplasma genitalium (strain ATCC 33530 / DSM 19775 / NCTC 10195 / G37) (Mycoplasmoides genitalium).